Reading from the N-terminus, the 228-residue chain is D-lyxose/D-mannose isomerase (228 aa).

Residues H103, H105, E110, and H171 each coordinate Mn(2+).

Belongs to the D-lyxose ketol-isomerase family. Homodimer. It depends on Mn(2+) as a cofactor.

It carries out the reaction D-lyxose = D-xylulose. The catalysed reaction is D-mannose = D-fructose. Its function is as follows. Sugar isomerase that catalyzes the reversible isomerization of D-lyxose to D-xylulose, and D-mannose to D-fructose. Shows optimum activity using D-lyxose as substrate, but can also effectively catalyze the isomerization between D-fructose and D-mannose. Shows lower activity with L-gulose, D-talose and L-ribose. The polypeptide is D-lyxose/D-mannose isomerase (Serratia proteamaculans).